We begin with the raw amino-acid sequence, 153 residues long: Ribosome maturation factor RimP (153 aa).

It belongs to the RimP family.

Its subcellular location is the cytoplasm. Its function is as follows. Required for maturation of 30S ribosomal subunits. This is Ribosome maturation factor RimP from Vesicomyosocius okutanii subsp. Calyptogena okutanii (strain HA).